We begin with the raw amino-acid sequence, 498 residues long: UDP-N-acetylmuramoyl-L-alanyl-D-glutamate--2,6-diaminopimelate ligase (498 aa).

Serine 29 is a binding site for UDP-N-acetyl-alpha-D-muramoyl-L-alanyl-D-glutamate. 120-126 (GTDGKTS) is an ATP binding site. UDP-N-acetyl-alpha-D-muramoyl-L-alanyl-D-glutamate is bound by residues 162–163 (TT), serine 189, glutamine 195, and arginine 197. An N6-carboxylysine modification is found at lysine 229. Meso-2,6-diaminopimelate-binding positions include arginine 392, 416–419 (DNPR), glycine 466, and glutamate 470. Positions 416 to 419 (DNPR) match the Meso-diaminopimelate recognition motif motif.

This sequence belongs to the MurCDEF family. MurE subfamily. The cofactor is Mg(2+). In terms of processing, carboxylation is probably crucial for Mg(2+) binding and, consequently, for the gamma-phosphate positioning of ATP.

It localises to the cytoplasm. The enzyme catalyses UDP-N-acetyl-alpha-D-muramoyl-L-alanyl-D-glutamate + meso-2,6-diaminopimelate + ATP = UDP-N-acetyl-alpha-D-muramoyl-L-alanyl-gamma-D-glutamyl-meso-2,6-diaminopimelate + ADP + phosphate + H(+). Its pathway is cell wall biogenesis; peptidoglycan biosynthesis. Its function is as follows. Catalyzes the addition of meso-diaminopimelic acid to the nucleotide precursor UDP-N-acetylmuramoyl-L-alanyl-D-glutamate (UMAG) in the biosynthesis of bacterial cell-wall peptidoglycan. The sequence is that of UDP-N-acetylmuramoyl-L-alanyl-D-glutamate--2,6-diaminopimelate ligase from Alkalilimnicola ehrlichii (strain ATCC BAA-1101 / DSM 17681 / MLHE-1).